The sequence spans 750 residues: MMIRSPEPEVKIVVDRDPVKTSFEEWARPGHFSRTIAKGPDTTTWIWNLHADAHDFDSHTGDLEEISRKVFSAHFGQLSIIFLWLSGMYFHGARFSNYEAWLSDPTHIGPSAQVVWPIVGQEILNGDVGGGFRGIQITSGFFQIWRASGITSELQLYCTAIGALIFASLMLFAGWFHYHKAAPKLAWFQDVESMLNHHLAGLLGLGSLSWAGHQIHVSLPINQFLDAGVDPKEIPLPHEFILNRDLLAQLYPSFAEGATPFFTLNWSKYAEFLSFRGGLDPITGGLWLSDIAHHHLAIAILFLIAGHMYRTNWGIGHGLKDILEAHKGPFTGQGHKGLYEILTTSWHAQLSLNLAMLGSTTIVVAHHMYSMPPYPYLATDYGTQLSLFTHHMWIGGFLIVGAAAHAAIFMVRDYDPTTRYNDLLDRVLRHRDAIISHLNWVCIFLGFHSFGLYIHNDTMSALGRPQDMFSDTAIQLQPIFAQWVQNLHAGAPSVTAPGATTSTSLTWGGGELVAVGGKVALLPIPLGTADFLVHHIHAFTIHVTVLILLKGVLFARSSRLIPDKANLGFRFPCDGPGRGGTCQVSAWDHVFLGLFWMYNSISVVIFHFSWKMQSDVWGTISDQGVVTHITGGNFAQSSITINGWLRDFLWAQASQVIQSYGSSLSAYGLFFLGAHFVWAFSLMFLFSGRGYWQELIESIVWAHNKLKVAPATQPRALSIIQGRAVGVTHYLLGGIATTWAFFLARIIAVG.

8 consecutive transmembrane segments (helical) span residues 70 to 93 (VFSA…FHGA), 156 to 179 (LYCT…FHYH), 195 to 219 (LNHH…HVSL), 291 to 309 (IAHH…GHMY), 346 to 369 (WHAQ…HHMY), 385 to 411 (LSLF…IFMV), 433 to 455 (AIIS…LYIH), and 531 to 549 (FLVH…LILL). [4Fe-4S] cluster contacts are provided by C573 and C582. The next 2 helical transmembrane spans lie at 589–610 (HVFL…HFSW) and 664–686 (LSAY…MFLF). H675 contacts chlorophyll a'. The chlorophyll a site is built by M683 and Y691. Residue W692 coordinates phylloquinone. Residues 724–744 (AVGVTHYLLGGIATTWAFFLA) form a helical membrane-spanning segment.

This sequence belongs to the PsaA/PsaB family. As to quaternary structure, the PsaA/B heterodimer binds the P700 chlorophyll special pair and subsequent electron acceptors. PSI consists of a core antenna complex that captures photons, and an electron transfer chain that converts photonic excitation into a charge separation. The eukaryotic PSI reaction center is composed of at least 11 subunits. The cofactor is P700 is a chlorophyll a/chlorophyll a' dimer, A0 is one or more chlorophyll a, A1 is one or both phylloquinones and FX is a shared 4Fe-4S iron-sulfur center..

Its subcellular location is the plastid. The protein resides in the chloroplast thylakoid membrane. It carries out the reaction reduced [plastocyanin] + hnu + oxidized [2Fe-2S]-[ferredoxin] = oxidized [plastocyanin] + reduced [2Fe-2S]-[ferredoxin]. Its function is as follows. PsaA and PsaB bind P700, the primary electron donor of photosystem I (PSI), as well as the electron acceptors A0, A1 and FX. PSI is a plastocyanin-ferredoxin oxidoreductase, converting photonic excitation into a charge separation, which transfers an electron from the donor P700 chlorophyll pair to the spectroscopically characterized acceptors A0, A1, FX, FA and FB in turn. Oxidized P700 is reduced on the lumenal side of the thylakoid membrane by plastocyanin. The sequence is that of Photosystem I P700 chlorophyll a apoprotein A1 from Oryza nivara (Indian wild rice).